Here is a 219-residue protein sequence, read N- to C-terminus: Histone H1.4 (219 aa).

Residues 1–15 (MSETAPAAPAAPAPA) show a composition bias toward low complexity. Positions 1–41 (MSETAPAAPAAPAPAEKTPVKKKARKSAGAAKRKASGPPVS) are disordered. Ser2 bears the N-acetylserine mark. Ser2 carries the phosphoserine modification. The residue at position 17 (Lys17) is an N6-acetyllysine. Residue Thr18 is modified to Phosphothreonine. A compositionally biased stretch (basic residues) spans 20–35 (VKKKARKSAGAAKRKA). Lys26 is modified (N6-acetyllysine; alternate). At Lys26 the chain carries N6-methyllysine; alternate. Lys34 bears the N6-(beta-hydroxybutyryl)lysine; alternate mark. The residue at position 34 (Lys34) is an N6-succinyllysine; alternate. Phosphoserine is present on Ser36. The H15 domain maps to 36–109 (SGPPVSELIT…GASGSFKLNK (74 aa)). Lys52 is subject to N6-(beta-hydroxybutyryl)lysine. Residue Arg54 is modified to Citrulline. 4 positions are modified to N6-(beta-hydroxybutyryl)lysine: Lys64, Lys85, Lys90, and Lys106. The tract at residues 91 to 219 (GTLVQTKGTG…KPKKAPAKKK (129 aa)) is disordered. A compositionally biased stretch (basic residues) spans 119–140 (KPKKAGAAKPKKPAGAAKKPKK). Residue Thr146 is modified to Phosphothreonine. 2 stretches are compositionally biased toward basic residues: residues 149-160 (KGAKKTPKKAKK) and 168-185 (KKAKSPKKAKAAKPKKAP). Ser187 bears the Phosphoserine mark. Residues 192-219 (KAVKPKAAKPKAAKPKTAKPKKAPAKKK) are compositionally biased toward basic residues.

It belongs to the histone H1/H5 family. In terms of processing, H1 histones are progressively phosphorylated during the cell cycle, becoming maximally phosphorylated during late G2 phase and M phase, and being dephosphorylated sharply thereafter. Post-translationally, acetylated at Lys-26. Deacetylated at Lys-26 by SIRT1. Citrullination at Arg-54 (H1R54ci) by PADI4 takes place within the DNA-binding site of H1 and results in its displacement from chromatin and global chromatin decondensation, thereby promoting pluripotency and stem cell maintenance.

Its subcellular location is the nucleus. The protein resides in the chromosome. In terms of biological role, histone H1 protein binds to linker DNA between nucleosomes forming the macromolecular structure known as the chromatin fiber. Histones H1 are necessary for the condensation of nucleosome chains into higher-order structured fibers. Also acts as a regulator of individual gene transcription through chromatin remodeling, nucleosome spacing and DNA methylation. In Oryctolagus cuniculus (Rabbit), this protein is Histone H1.4.